Consider the following 499-residue polypeptide: Aspartyl/glutamyl-tRNA(Asn/Gln) amidotransferase subunit B (499 aa).

It belongs to the GatB/GatE family. GatB subfamily. Heterotrimer of A, B and C subunits.

It catalyses the reaction L-glutamyl-tRNA(Gln) + L-glutamine + ATP + H2O = L-glutaminyl-tRNA(Gln) + L-glutamate + ADP + phosphate + H(+). The catalysed reaction is L-aspartyl-tRNA(Asn) + L-glutamine + ATP + H2O = L-asparaginyl-tRNA(Asn) + L-glutamate + ADP + phosphate + 2 H(+). In terms of biological role, allows the formation of correctly charged Asn-tRNA(Asn) or Gln-tRNA(Gln) through the transamidation of misacylated Asp-tRNA(Asn) or Glu-tRNA(Gln) in organisms which lack either or both of asparaginyl-tRNA or glutaminyl-tRNA synthetases. The reaction takes place in the presence of glutamine and ATP through an activated phospho-Asp-tRNA(Asn) or phospho-Glu-tRNA(Gln). The sequence is that of Aspartyl/glutamyl-tRNA(Asn/Gln) amidotransferase subunit B from Leifsonia xyli subsp. xyli (strain CTCB07).